The following is a 663-amino-acid chain: Protein THEMIS2 (663 aa).

2 CABIT regions span residues 2–237 (EPVP…TASS) and 238–515 (QHIH…EAEG). Positions 545–663 (ASESQAPPPR…DMDDHDYEEI (119 aa)) are disordered. Residues 559–577 (QGINKKQQNIQSCKESSVK) are compositionally biased toward polar residues. The residue at position 596 (threonine 596) is a Phosphothreonine. Residues 621–641 (NPQTQNSVLSMKPKTSSSLGK) show a composition bias toward polar residues. The span at 653-663 (PDMDDHDYEEI) shows a compositional bias: acidic residues. Phosphotyrosine is present on tyrosine 660.

It belongs to the themis family. Interacts with VAV1. Interacts with LAT. Interacts constitutively with GRB2, LYN and PLCG2; these interactions increase the activation of PLCG2 and its downstream pathways following B cell receptor stimulation. Phosphorylation at Tyr-660 is induced by LPS. Phosphorylated by Src kinases (Lck or Fyn) following BCR engagement. Expressed in both developing and mature B-cells with high expression in immature, follicular and B1 B cells. Also expressed in macrophages and dendritic cells. Down-regulated in splenocytes of mice developing arthritis in a collagen-induced model, not in those of mice failing to develop the disease. Transiently down-regulated in splenocytes of mice infected with influenza virus.

The protein localises to the nucleus. Its subcellular location is the cytoplasm. Functionally, may constitute a control point in macrophage inflammatory response, promoting LPS-induced TLR4-mediated TNF production. Determines the threshold for activation of B cells by low-affinity and low-avidity ligands via PLCG2 activation and its downstream pathways. In Mus musculus (Mouse), this protein is Protein THEMIS2.